We begin with the raw amino-acid sequence, 179 residues long: Inner membrane-spanning protein YciB (179 aa).

Transmembrane regions (helical) follow at residues 22 to 42 (IYAA…YTWI), 50 to 70 (MALI…FFHN), 76 to 96 (WKVT…QWVM), 121 to 141 (IAWA…AFWM), and 149 to 169 (FKVF…GVYI).

The protein belongs to the YciB family.

Its subcellular location is the cell inner membrane. Functionally, plays a role in cell envelope biogenesis, maintenance of cell envelope integrity and membrane homeostasis. The sequence is that of Inner membrane-spanning protein YciB from Enterobacter sp. (strain 638).